A 317-amino-acid polypeptide reads, in one-letter code: NAD-dependent protein deacetylase Sirt6 (317 aa).

Residues 27–273 form the Deacetylase sirtuin-type domain; it reads DEVVAEKCQE…SKVCKLLGVE (247 aa). The NAD(+) site is built by alanine 53, threonine 57, phenylalanine 64, arginine 65, tryptophan 71, glutamine 113, and histidine 133. Residue histidine 133 is the Proton acceptor of the active site. Zn(2+) contacts are provided by cysteine 141, cysteine 144, cysteine 166, and cysteine 177. Glycine 215, asparagine 241, glutamine 243, and valine 259 together coordinate NAD(+).

Belongs to the sirtuin family. Class IV subfamily. Requires Zn(2+) as cofactor. As to expression, widely expressed.

The protein localises to the nucleus. The protein resides in the chromosome. The enzyme catalyses N(6)-acetyl-L-lysyl-[protein] + NAD(+) + H2O = 2''-O-acetyl-ADP-D-ribose + nicotinamide + L-lysyl-[protein]. Its function is as follows. NAD-dependent histone deacylase that acts as a regulator of life span. This is NAD-dependent protein deacetylase Sirt6 from Drosophila melanogaster (Fruit fly).